A 197-amino-acid chain; its full sequence is FMN-dependent NADH:quinone oxidoreductase (197 aa).

Residues serine 10, serine 16–serine 18, and methionine 96–phenylalanine 99 each bind FMN.

Belongs to the azoreductase type 1 family. In terms of assembly, homodimer. FMN serves as cofactor.

The catalysed reaction is 2 a quinone + NADH + H(+) = 2 a 1,4-benzosemiquinone + NAD(+). It carries out the reaction N,N-dimethyl-1,4-phenylenediamine + anthranilate + 2 NAD(+) = 2-(4-dimethylaminophenyl)diazenylbenzoate + 2 NADH + 2 H(+). In terms of biological role, quinone reductase that provides resistance to thiol-specific stress caused by electrophilic quinones. Also exhibits azoreductase activity. Catalyzes the reductive cleavage of the azo bond in aromatic azo compounds to the corresponding amines. This is FMN-dependent NADH:quinone oxidoreductase from Marinomonas sp. (strain MWYL1).